Reading from the N-terminus, the 716-residue chain is Delta-1-pyrroline-5-carboxylate synthase 1 (716 aa).

The interval 1–296 is glutamate 5-kinase; sequence MASVDPSRSF…WESSKDVSTR (296 aa). Positions 60, 157, and 176 each coordinate substrate. ATP-binding positions include 196–197, 202–207, and 236–242; these read SD, YSGPPS, and RGGMTAK. Positions 297–716 are gamma-glutamyl phosphate reductase; it reads EMAVAARDCS…VYTHKSLPLQ (420 aa).

This sequence in the N-terminal section; belongs to the glutamate 5-kinase family. In the C-terminal section; belongs to the gamma-glutamyl phosphate reductase family. In terms of tissue distribution, expressed at high levels in leaves.

It carries out the reaction L-glutamate + ATP = L-glutamyl 5-phosphate + ADP. The catalysed reaction is L-glutamate 5-semialdehyde + phosphate + NADP(+) = L-glutamyl 5-phosphate + NADPH + H(+). It functions in the pathway amino-acid biosynthesis; L-proline biosynthesis; L-glutamate 5-semialdehyde from L-glutamate: step 1/2. Its pathway is amino-acid biosynthesis; L-proline biosynthesis; L-glutamate 5-semialdehyde from L-glutamate: step 2/2. With respect to regulation, feedback regulated by proline. Functionally, P5CS plays a key role in proline biosynthesis, leading to osmoregulation in plants. Involved in abiotic stress tolerance. This Oryza sativa subsp. japonica (Rice) protein is Delta-1-pyrroline-5-carboxylate synthase 1.